Consider the following 257-residue polypeptide: Small ribosomal subunit protein uS2 (257 aa).

Belongs to the universal ribosomal protein uS2 family.

This Ruegeria pomeroyi (strain ATCC 700808 / DSM 15171 / DSS-3) (Silicibacter pomeroyi) protein is Small ribosomal subunit protein uS2.